The primary structure comprises 447 residues: Probable glycine dehydrogenase (decarboxylating) subunit 1 (447 aa).

Belongs to the GcvP family. N-terminal subunit subfamily. The glycine cleavage system is composed of four proteins: P, T, L and H. In this organism, the P 'protein' is a heterodimer of two subunits.

It carries out the reaction N(6)-[(R)-lipoyl]-L-lysyl-[glycine-cleavage complex H protein] + glycine + H(+) = N(6)-[(R)-S(8)-aminomethyldihydrolipoyl]-L-lysyl-[glycine-cleavage complex H protein] + CO2. In terms of biological role, the glycine cleavage system catalyzes the degradation of glycine. The P protein binds the alpha-amino group of glycine through its pyridoxal phosphate cofactor; CO(2) is released and the remaining methylamine moiety is then transferred to the lipoamide cofactor of the H protein. The protein is Probable glycine dehydrogenase (decarboxylating) subunit 1 of Macrococcus caseolyticus (strain JCSC5402) (Macrococcoides caseolyticum).